Here is a 248-residue protein sequence, read N- to C-terminus: Small ribosomal subunit protein uS3 (248 aa).

The 70-residue stretch at 39 to 108 (IRKLVDKKLS…TVAVNVAEIP (70 aa)) folds into the KH type-2 domain. Residues 214 to 248 (ETIARPQRRNDERRPEGGDRANRRRPTARRRAGGE) are disordered. Positions 221-234 (RRNDERRPEGGDRA) are enriched in basic and acidic residues. Residues 235 to 248 (NRRRPTARRRAGGE) show a composition bias toward basic residues.

It belongs to the universal ribosomal protein uS3 family. As to quaternary structure, part of the 30S ribosomal subunit. Forms a tight complex with proteins S10 and S14.

Its function is as follows. Binds the lower part of the 30S subunit head. Binds mRNA in the 70S ribosome, positioning it for translation. The sequence is that of Small ribosomal subunit protein uS3 from Deinococcus deserti (strain DSM 17065 / CIP 109153 / LMG 22923 / VCD115).